The sequence spans 1158 residues: ATP-dependent helicase/deoxyribonuclease subunit B (1158 aa).

One can recognise a UvrD-like helicase ATP-binding domain in the interval 1–275; sequence MTLHAYLGRA…QYFNQLYRFN (275 aa). Residue 8–15 participates in ATP binding; the sequence is GRAGTGKS. Residues 269 to 583 form the UvrD-like helicase C-terminal domain; sequence NQLYRFNNQD…SIGTMDLAKV (315 aa). Residues Cys-784, Cys-1112, Cys-1115, and Cys-1121 each coordinate [4Fe-4S] cluster.

It belongs to the helicase family. AddB/RexB type 1 subfamily. As to quaternary structure, heterodimer of AddA and AddB. Mg(2+) serves as cofactor. Requires [4Fe-4S] cluster as cofactor.

In terms of biological role, the heterodimer acts as both an ATP-dependent DNA helicase and an ATP-dependent, dual-direction single-stranded exonuclease. Recognizes the chi site generating a DNA molecule suitable for the initiation of homologous recombination. The AddB subunit has 5' -&gt; 3' nuclease activity but not helicase activity. This Staphylococcus aureus (strain MRSA252) protein is ATP-dependent helicase/deoxyribonuclease subunit B.